The chain runs to 439 residues: ATP-dependent RNA helicase SUB2 (439 aa).

Positions 1-19 (MSHEGEEDLLEYSDNEQEI) are enriched in acidic residues. Positions 1–48 (MSHEGEEDLLEYSDNEQEIQVDNKETAVEGTTENEATQENGEADKKGS) are disordered. Over residues 29 to 40 (EGTTENEATQEN) the composition is skewed to polar residues. Residues 55-83 (TGFKDFLLKPELSRAIIDCGFEHPSEVQQ) carry the Q motif motif. Residues 86 to 261 (IPQSIHGTDV…RRFLQNPLEI (176 aa)) enclose the Helicase ATP-binding domain. 99-106 (AKSGLGKT) provides a ligand contact to ATP. The DECD box motif lies at 208–211 (DECD). Residues 273–434 (GLQQYYIKLE…EFPEEGIDPS (162 aa)) form the Helicase C-terminal domain.

The protein belongs to the DEAD box helicase family. DECD subfamily.

It is found in the nucleus. It carries out the reaction ATP + H2O = ADP + phosphate + H(+). In terms of biological role, ATP-binding RNA helicase involved in transcription elongation and required for the export of mRNA out of the nucleus. SUB2 also plays a role in pre-mRNA splicing and spliceosome assembly. May be involved in rDNA and telomeric silencing, and maintenance of genome integrity. This is ATP-dependent RNA helicase SUB2 (SUB2) from Candida glabrata (strain ATCC 2001 / BCRC 20586 / JCM 3761 / NBRC 0622 / NRRL Y-65 / CBS 138) (Yeast).